Consider the following 341-residue polypeptide: Homeobox protein knotted-1-like 8 (341 aa).

Residues 1–17 (MESFASLAGGGSSSTTA) show a composition bias toward low complexity. Disordered regions lie at residues 1-72 (MESF…AVQG), 121-148 (AAQQ…DQLD), and 187-207 (AESN…SDKQ). The segment covering 187–196 (AESNCEGTGS) has biased composition (polar residues). One can recognise an ELK domain in the interval 207 to 227 (QLKHQLLRKYGGSLGDLRQVF). Positions 228–291 (SKRTKKGKLP…NQRKRHWKPT (64 aa)) form a DNA-binding region, homeobox; TALE-type.

It belongs to the TALE/KNOX homeobox family.

It localises to the nucleus. In terms of biological role, probable transcription factor that may be involved in shoot formation during embryogenesis. The polypeptide is Homeobox protein knotted-1-like 8 (OSH43) (Oryza sativa subsp. japonica (Rice)).